Here is a 278-residue protein sequence, read N- to C-terminus: Outer spore wall protein 1 (278 aa).

It is found in the spore wall. Its function is as follows. May be involved in a late step of spore wall assembly. The chain is Outer spore wall protein 1 (OSW1) from Saccharomyces cerevisiae (strain ATCC 204508 / S288c) (Baker's yeast).